A 2110-amino-acid polypeptide reads, in one-letter code: Protein Ycf2 (2110 aa).

Residues 190–209 (DSSQLKGSSDQSRDPLDSIS) form a disordered region. Residue 1442–1449 (GSIGTGRS) participates in ATP binding.

This sequence belongs to the Ycf2 family.

The protein localises to the plastid. It is found in the chloroplast stroma. Functionally, probable ATPase of unknown function. Its presence in a non-photosynthetic plant (Epifagus virginiana) and experiments in tobacco indicate that it has an essential function which is probably not related to photosynthesis. This is Protein Ycf2 from Panax ginseng (Korean ginseng).